The primary structure comprises 108 residues: Iron-sulfur cluster assembly protein CyaY (108 aa).

Belongs to the frataxin family.

Its function is as follows. Involved in iron-sulfur (Fe-S) cluster assembly. May act as a regulator of Fe-S biogenesis. This is Iron-sulfur cluster assembly protein CyaY from Burkholderia orbicola (strain MC0-3).